The sequence spans 62 residues: Photosystem II reaction center protein Z (62 aa).

A run of 2 helical transmembrane segments spans residues 8–28 and 41–61; these read AVFA…VVLA and FSGA…NSFI.

Belongs to the PsbZ family. As to quaternary structure, PSII is composed of 1 copy each of membrane proteins PsbA, PsbB, PsbC, PsbD, PsbE, PsbF, PsbH, PsbI, PsbJ, PsbK, PsbL, PsbM, PsbT, PsbY, PsbZ, Psb30/Ycf12, at least 3 peripheral proteins of the oxygen-evolving complex and a large number of cofactors. It forms dimeric complexes.

The protein resides in the plastid. The protein localises to the chloroplast thylakoid membrane. Its function is as follows. May control the interaction of photosystem II (PSII) cores with the light-harvesting antenna, regulates electron flow through the 2 photosystem reaction centers. PSII is a light-driven water plastoquinone oxidoreductase, using light energy to abstract electrons from H(2)O, generating a proton gradient subsequently used for ATP formation. The sequence is that of Photosystem II reaction center protein Z from Marchantia polymorpha (Common liverwort).